The primary structure comprises 330 residues: Putative 4-hydroxythreonine-4-phosphate dehydrogenase (330 aa).

3 residues coordinate a divalent metal cation: His-169, His-213, and His-263.

It belongs to the PdxA family. Homodimer. The cofactor is Zn(2+). Requires Mg(2+) as cofactor. Co(2+) is required as a cofactor.

Its subcellular location is the cytoplasm. It catalyses the reaction 4-(phosphooxy)-L-threonine + NAD(+) = 3-amino-2-oxopropyl phosphate + CO2 + NADH. It participates in cofactor biosynthesis; pyridoxine 5'-phosphate biosynthesis; pyridoxine 5'-phosphate from D-erythrose 4-phosphate: step 4/5. Its function is as follows. Catalyzes the NAD(P)-dependent oxidation of 4-(phosphooxy)-L-threonine (HTP) into 2-amino-3-oxo-4-(phosphooxy)butyric acid which spontaneously decarboxylates to form 3-amino-2-oxopropyl phosphate (AHAP). This chain is Putative 4-hydroxythreonine-4-phosphate dehydrogenase, found in Novosphingobium aromaticivorans (Sphingomonas aromaticivorans).